The primary structure comprises 403 residues: Probable eukaryotic initiation factor 4A (403 aa).

The tract at residues 1–29 is disordered; sequence MAQNDKIAPQDQDSFLDDQPGVRPIPSFD. The Q motif signature appears at 26–54; it reads PSFDDMPLHQNLLRGIYSYGFEKPSSIQQ. In terms of domain architecture, Helicase ATP-binding spans 57–230; that stretch reads IAPFTRGGDI…KKFMRDPVRI (174 aa). 70–77 serves as a coordination point for ATP; that stretch reads AQSGTGKT. Positions 178–181 match the DEAD box motif; it reads DEAD. The Helicase C-terminal domain maps to 241-401; sequence GIKQFFIAVE…ELPVDFAAYL (161 aa).

Belongs to the DEAD box helicase family. eIF4A subfamily. As to quaternary structure, eIF4F is a multi-subunit complex, the composition of which varies with external and internal environmental conditions. It is composed of at least EIF4A, EIF4E and EIF4G.

It carries out the reaction ATP + H2O = ADP + phosphate + H(+). Functionally, ATP-dependent RNA helicase which is a subunit of the eIF4F complex involved in cap recognition and is required for mRNA binding to ribosome. In the current model of translation initiation, eIF4A unwinds RNA secondary structures in the 5'-UTR of mRNAs which is necessary to allow efficient binding of the small ribosomal subunit, and subsequent scanning for the initiator codon. This chain is Probable eukaryotic initiation factor 4A, found in Leishmania infantum.